The primary structure comprises 757 residues: Chloride anion exchanger (757 aa).

At 1–71 (MIEAIGNQYV…SWLPAYKIKE (71 aa)) the chain is on the cytoplasmic side. Residues 72-92 (WLLSDIVSGISTGLVAVLQGL) form a helical membrane-spanning segment. Residue alanine 93 is a topological domain, extracellular. Residues 94-114 (FALLVNIPPAYGLYAAFFPVI) form a helical membrane-spanning segment. At 115 to 124 (TYFFLGTSRH) the chain is on the cytoplasmic side. Residues 125–145 (ISVGPFPVLSMMVGVVVTRVA) form a helical membrane-spanning segment. Over 146–176 (SGSDTSPALSSSSAENDSMIEEKVMVAASVT) the chain is Extracellular. Residue asparagine 161 is glycosylated (N-linked (GlcNAc...) asparagine). The chain crosses the membrane as a helical span at residues 177–197 (VLSGIIQLLLGVLQIGFVVIY). Over 198–201 (LSES) the chain is Cytoplasmic. Residues 202 to 222 (LISGFTTAAAIHVLVSQLKFM) form a helical membrane-spanning segment. Over 223–250 (LQLTVPAHSDPFSIFKVLESVFSQIQKT) the chain is Extracellular. Residues 251–271 (NIADLVTSVIILVVVFVVKEI) traverse the membrane as a helical segment. Over 272-278 (NQRYRSK) the chain is Cytoplasmic. The helical transmembrane segment at 279 to 299 (LPVPIPIELIMTVIATGISYG) threads the bilayer. Residues 300–335 (CNFEQRFGVAVVGNMSLGFQPPITPSVEVFQDTIGD) are Extracellular-facing. A helical membrane pass occupies residues 336 to 356 (CFGIAIVGFAVAFSVASVYSL). The Cytoplasmic portion of the chain corresponds to 357 to 367 (KYDYPIDGNQE). Residues 368-388 (LIALGVSNIFTGAFKGFAGST) traverse the membrane as a helical segment. The Extracellular portion of the chain corresponds to 389–404 (ALSRSGVQESTGGKTQ). A helical membrane pass occupies residues 405–425 (VAGLLSAVIVLIVIVAIGFLL). The Cytoplasmic portion of the chain corresponds to 426-462 (QPLQKSVLAALALGNLKGMLMQFAEIGRLWKKDKYDC). The chain crosses the membrane as a helical span at residues 463 to 483 (LIWIMTFIFAIVLGLGLGLAA). Residues 484-757 (SVAFQLLTIV…ECQVPVETKF (274 aa)) lie on the Extracellular side of the membrane. Residues 518–713 (NYADVYEPEG…LTIHDAILHI (196 aa)) enclose the STAS domain. Residues 754-757 (ETKF) carry the PDZ-binding motif.

This sequence belongs to the SLC26A/SulP transporter (TC 2.A.53) family. Interacts with PDZK1, CFTR, SLC26A6 and NHERF1. Interacts (via PDZ-binding motif) with NHERF4 (via the third PDZ domain); interaction leads to decreased expression of SLC26A3 on the cell membrane resulting in its reduced exchanger activity. Post-translationally, N-glycosylation is required for efficient cell surface expression, and protection from proteolytic degradation.

The protein resides in the apical cell membrane. It is found in the membrane. Its subcellular location is the cell membrane. It carries out the reaction hydrogencarbonate(in) + 2 chloride(out) = hydrogencarbonate(out) + 2 chloride(in). Mediates chloride-bicarbonate exchange with a chloride bicarbonate stoichiometry of 2:1 in the intestinal epithelia. Plays a role in the chloride and bicarbonate homeostasis during sperm epididymal maturation and capacitation. In Rattus norvegicus (Rat), this protein is Chloride anion exchanger (Slc26a3).